A 426-amino-acid chain; its full sequence is Serine--tRNA ligase (426 aa).

230–232 (TAE) is an L-serine binding site. Residue 261-263 (RSE) coordinates ATP. Residue glutamate 284 coordinates L-serine. ATP is bound at residue 348–351 (EISS). Serine 384 serves as a coordination point for L-serine.

This sequence belongs to the class-II aminoacyl-tRNA synthetase family. Type-1 seryl-tRNA synthetase subfamily. As to quaternary structure, homodimer. The tRNA molecule binds across the dimer.

Its subcellular location is the cytoplasm. It catalyses the reaction tRNA(Ser) + L-serine + ATP = L-seryl-tRNA(Ser) + AMP + diphosphate + H(+). It carries out the reaction tRNA(Sec) + L-serine + ATP = L-seryl-tRNA(Sec) + AMP + diphosphate + H(+). Its pathway is aminoacyl-tRNA biosynthesis; selenocysteinyl-tRNA(Sec) biosynthesis; L-seryl-tRNA(Sec) from L-serine and tRNA(Sec): step 1/1. Catalyzes the attachment of serine to tRNA(Ser). Is also able to aminoacylate tRNA(Sec) with serine, to form the misacylated tRNA L-seryl-tRNA(Sec), which will be further converted into selenocysteinyl-tRNA(Sec). The chain is Serine--tRNA ligase from Streptococcus mutans serotype c (strain ATCC 700610 / UA159).